We begin with the raw amino-acid sequence, 142 residues long: Hemoglobin subunit alpha-2 (142 aa).

The Globin domain occupies 2–142 (VLSAADKSNI…VSTVLTSKYR (141 aa)). H59 lines the O2 pocket. H88 is a heme b binding site.

This sequence belongs to the globin family. Heterotetramer of two alpha chains and two beta chains. In terms of tissue distribution, red blood cells.

Its function is as follows. Involved in oxygen transport from the lung to the various peripheral tissues. This chain is Hemoglobin subunit alpha-2, found in Bubalus bubalis (Domestic water buffalo).